We begin with the raw amino-acid sequence, 320 residues long: GDP-L-fucose synthase (320 aa).

NADP(+) is bound at residue 14–20; it reads GGSGLVG. Residue Y142 is the Proton donor/acceptor of the active site. Residues K146, 169–172, and H185 contribute to the NADP(+) site; that span reads PTNI. Substrate-binding residues include K193, R214, and D276.

This sequence belongs to the NAD(P)-dependent epimerase/dehydratase family. Fucose synthase subfamily.

The enzyme catalyses GDP-beta-L-fucose + NADP(+) = GDP-4-dehydro-alpha-D-rhamnose + NADPH + H(+). It participates in nucleotide-sugar biosynthesis; GDP-L-fucose biosynthesis via de novo pathway; GDP-L-fucose from GDP-alpha-D-mannose: step 2/2. In terms of biological role, catalyzes the two-step NADP-dependent conversion of GDP-4-dehydro-6-deoxy-D-mannose to GDP-fucose, involving an epimerase and a reductase reaction. The polypeptide is GDP-L-fucose synthase (ger) (Dictyostelium discoideum (Social amoeba)).